The following is a 389-amino-acid chain: BTB/POZ domain-containing protein KCTD9 (389 aa).

A KHA domain is found at 3–82; the sequence is RVTLFLNGSP…PQTDSKPPEG (80 aa). A Phosphoserine modification is found at S11. One can recognise a BTB domain in the interval 89-161; the sequence is DWLTLNVGGR…LRHGQLIVND (73 aa). Pentapeptide repeat domains follow at residues 224–256, 258–297, and 338–376; these read NFSG…ANLC, ANLE…NFED, and CNLR…AIFE.

As to quaternary structure, forms pentamers. Component of a complex composed of 5 subunits of KCTD9 and 5 CUL3.

The protein operates within protein modification; protein ubiquitination. Its function is as follows. Substrate-specific adapter of a BCR (BTB-CUL3-RBX1) E3 ubiquitin-protein ligase complex, which mediates the ubiquitination of target proteins, leading to their degradation by the proteasome. In Homo sapiens (Human), this protein is BTB/POZ domain-containing protein KCTD9 (KCTD9).